A 94-amino-acid chain; its full sequence is Cystatin-A1 (94 aa).

The Secondary area of contact signature appears at 45 to 49 (QLVAG).

It belongs to the cystatin family.

Its subcellular location is the cytoplasm. Intracellular thiol proteinase inhibitor. Inhibits papain, but not cathepsin B. The polypeptide is Cystatin-A1 (cpiA) (Dictyostelium discoideum (Social amoeba)).